Consider the following 486-residue polypeptide: Acetyl-coenzyme A carboxylase carboxyl transferase subunit beta, chloroplastic (486 aa).

The CoA carboxyltransferase N-terminal domain maps to leucine 224–proline 486. Residues cysteine 228, cysteine 231, cysteine 247, and cysteine 250 each coordinate Zn(2+). A C4-type zinc finger spans residues cysteine 228–cysteine 250.

Belongs to the AccD/PCCB family. In terms of assembly, acetyl-CoA carboxylase is a heterohexamer composed of biotin carboxyl carrier protein, biotin carboxylase and 2 subunits each of ACCase subunit alpha and ACCase plastid-coded subunit beta (accD). It depends on Zn(2+) as a cofactor.

It is found in the plastid. The protein localises to the chloroplast stroma. It catalyses the reaction N(6)-carboxybiotinyl-L-lysyl-[protein] + acetyl-CoA = N(6)-biotinyl-L-lysyl-[protein] + malonyl-CoA. It participates in lipid metabolism; malonyl-CoA biosynthesis; malonyl-CoA from acetyl-CoA: step 1/1. Functionally, component of the acetyl coenzyme A carboxylase (ACC) complex. Biotin carboxylase (BC) catalyzes the carboxylation of biotin on its carrier protein (BCCP) and then the CO(2) group is transferred by the transcarboxylase to acetyl-CoA to form malonyl-CoA. The sequence is that of Acetyl-coenzyme A carboxylase carboxyl transferase subunit beta, chloroplastic from Nymphaea alba (White water-lily).